The following is a 320-amino-acid chain: Tetraspanin-32 (320 aa).

Transmembrane regions (helical) follow at residues 14-34 (MLVTCFFILLLGLSVATMVTL), 60-80 (WAFSAGLSLVGLLTLGAVLSA), 90-110 (LMAGGFLCFSLAFCAQVQVVF), and 203-223 (SIGLALTVSALLFSSFLWFAI).

Belongs to the tetraspanin (TM4SF) family. Expressed ubiquitously at low levels. High levels of expression are confined to hematopoietic tissues including peripheral blood leukocytes, thymus and spleen.

The protein localises to the membrane. This chain is Tetraspanin-32 (TSPAN32), found in Homo sapiens (Human).